The sequence spans 416 residues: Glutamyl-tRNA reductase (416 aa).

Substrate is bound by residues 49 to 52, S105, 110 to 112, and Q116; these read TCNR and EPQ. Residue C50 is the Nucleophile of the active site. 185–190 serves as a coordination point for NADP(+); the sequence is GAGETI.

Belongs to the glutamyl-tRNA reductase family. Homodimer.

The enzyme catalyses (S)-4-amino-5-oxopentanoate + tRNA(Glu) + NADP(+) = L-glutamyl-tRNA(Glu) + NADPH + H(+). The protein operates within porphyrin-containing compound metabolism; protoporphyrin-IX biosynthesis; 5-aminolevulinate from L-glutamyl-tRNA(Glu): step 1/2. In terms of biological role, catalyzes the NADPH-dependent reduction of glutamyl-tRNA(Glu) to glutamate 1-semialdehyde (GSA). This is Glutamyl-tRNA reductase from Shewanella sp. (strain MR-7).